The sequence spans 172 residues: Male-specific submandibular salivary gland protein (172 aa).

A signal peptide spans 1–15; it reads MVKFLLLALALGVSC. An N-linked (GlcNAc...) asparagine glycan is attached at Asn41. 2 cysteine pairs are disulfide-bonded: Cys60–Cys64 and Cys79–Cys170.

This sequence belongs to the calycin superfamily. Lipocalin family. Post-translationally, N-glycosylated. As to expression, expressed in acinar cells of the submandibular salivary gland from where it is secreted into saliva (at protein level). Also released from the submandibular salivary gland into blood and excreted in urine (at protein level). Expressed in the lacrimal gland from where it is secreted into tears (at protein level).

It localises to the secreted. Its subcellular location is the cytoplasm. In Mesocricetus auratus (Golden hamster), this protein is Male-specific submandibular salivary gland protein.